Consider the following 156-residue polypeptide: Small ribosomal subunit protein uS7 (156 aa).

The protein belongs to the universal ribosomal protein uS7 family. In terms of assembly, part of the 30S ribosomal subunit. Contacts proteins S9 and S11.

Its function is as follows. One of the primary rRNA binding proteins, it binds directly to 16S rRNA where it nucleates assembly of the head domain of the 30S subunit. Is located at the subunit interface close to the decoding center, probably blocks exit of the E-site tRNA. The protein is Small ribosomal subunit protein uS7 of Pseudomonas fluorescens (strain ATCC BAA-477 / NRRL B-23932 / Pf-5).